Here is a 251-residue protein sequence, read N- to C-terminus: YlmG homolog protein 2, chloroplastic (251 aa).

The N-terminal 51 residues, 1 to 51, are a transit peptide targeting the chloroplast; that stretch reads MEASANEPAMKSLKSNPSGPIPNFFVSLSSAFTQTPLVRSNKPNLLLLPPV. 2 helical membrane-spanning segments follow: residues 119–139 and 183–203; these read GFAAVLPGDSVAGLVVANGLI and FIPPLGGLDLSPILAFLVLNA. Positions 232–243 are enriched in basic residues; it reads VRRRRLSSHKDH. The interval 232–251 is disordered; that stretch reads VRRRRLSSHKDHRPSSASMT.

Belongs to the YggT family.

Its subcellular location is the plastid. The protein localises to the chloroplast thylakoid membrane. Its function is as follows. Not required for the biogenesis and accumulation of native cytochrome b6 in the thylakoid membrane. Not functionally involved in the pathway for covalent binding of the c-type heme to cytochrome b6. This is YlmG homolog protein 2, chloroplastic from Arabidopsis thaliana (Mouse-ear cress).